A 175-amino-acid polypeptide reads, in one-letter code: uncharacterized protein (175 aa).

Residues 107–138 (KTEEEAEKTLQEIERKIFKKLWENLDKERKRE) are a coiled coil.

This is an uncharacterized protein from Aquifex aeolicus (strain VF5).